We begin with the raw amino-acid sequence, 126 residues long: uncharacterized protein (126 aa).

This is an uncharacterized protein from Acanthamoeba polyphaga mimivirus (APMV).